A 497-amino-acid chain; its full sequence is Glycerol kinase (497 aa).

Thr12 serves as a coordination point for ADP. ATP-binding residues include Thr12, Thr13, and Ser14. Residue Thr12 participates in sn-glycerol 3-phosphate binding. Arg16 is an ADP binding site. 4 residues coordinate sn-glycerol 3-phosphate: Arg82, Glu83, Tyr134, and Asp243. Residues Arg82, Glu83, Tyr134, Asp243, and Gln244 each contribute to the glycerol site. ADP-binding residues include Thr265 and Gly308. Positions 265, 308, 312, and 409 each coordinate ATP. Positions 409 and 413 each coordinate ADP.

This sequence belongs to the FGGY kinase family. As to quaternary structure, homotetramer and homodimer (in equilibrium).

It carries out the reaction glycerol + ATP = sn-glycerol 3-phosphate + ADP + H(+). It functions in the pathway polyol metabolism; glycerol degradation via glycerol kinase pathway; sn-glycerol 3-phosphate from glycerol: step 1/1. Its activity is regulated as follows. Activated by phosphorylation and inhibited by fructose 1,6-bisphosphate (FBP). In terms of biological role, key enzyme in the regulation of glycerol uptake and metabolism. Catalyzes the phosphorylation of glycerol to yield sn-glycerol 3-phosphate. This is Glycerol kinase from Thermoanaerobacter sp. (strain X514).